A 439-amino-acid chain; its full sequence is Skin secretory protein xP2 (439 aa).

Residues 1–22 (MNHKLFCVHFLLLILSVCYIQG) form the signal peptide. Positions 25 to 351 (AGGEPAPAEG…VEVGPKTEDC (327 aa)) are disordered. A run of 5 repeats spans residues 26–33 (GGEPAPAE), 34–41 (GVAPAPAE), 42–51 (GGAPAPAPAE), 52–59 (GEAPAPAE), and 60–69 (GGAPAPAPAE). The segment at 26 to 343 (GGEPAPAEGV…APAPAPAPVE (318 aa)) is 33 X approximate repeats of G-G(0,1)-[EV](0,1)-A-P-[A-P](1,3)-A-E. Positions 26-345 (GGEPAPAEGV…APAPAPVEVG (320 aa)) are enriched in low complexity. A 6; approximate repeat occupies 70–77 (GAEPAPAD). Tandem repeats lie at residues 78–87 (GGAPAPAPAE), 88–97 (GGAPAPAPAE), 98–107 (GGAPAPAPAE), 108–115 (GGAPAPAE), 116–125 (GGAPAPAPAE), 126–135 (GEAPAPAPAE), 136–145 (GEAPAPAPAE), 146–153 (GEAPAPAE), and 154–163 (GEAPAPAPAE). A 16; approximate repeat occupies 164-173 (VEAPAPAPAE). A run of 14 repeats spans residues 174 to 183 (GEAPAPAPAE), 184 to 193 (GEAPAPAPAE), 194 to 203 (GEAPAPAPAE), 204 to 215 (GEAPAPAPAPAE), 216 to 225 (GEAPAPAPAE), 226 to 235 (GEAPAPAPAE), 236 to 245 (GEAPAPAPAE), 246 to 255 (GEAPAPAPAE), 256 to 265 (GEAPAPAPAE), 266 to 275 (GEAPAPAPAE), 276 to 285 (GEAPAPAPAE), 286 to 293 (GEAPAPAE), 294 to 303 (GEAPAPAPAE), and 304 to 313 (GEAPAPAPAE). The 31; approximate repeat unit spans residues 314 to 321 (GGAPSPAE). One copy of the 32; approximate repeat lies at 322 to 331 (GGAPAAAPAE). One copy of the 33; approximate repeat lies at 332-343 (GGAPAPAPAPVE). P-type domains are found at residues 349–392 (EDCK…FFPR) and 396–439 (AQCL…FHQK). Cystine bridges form between Cys351–Cys377, Cys361–Cys376, Cys371–Cys388, Cys398–Cys424, Cys408–Cys423, and Cys418–Cys435.

Skin.

It localises to the secreted. Functionally, may act as a growth factor in the germinal layer of the epidermis. May also be involved in growth of regenerating glands and in protection of the skin from the external environment. In Xenopus laevis (African clawed frog), this protein is Skin secretory protein xP2 (p2).